Reading from the N-terminus, the 913-residue chain is Vacuolar membrane protease (913 aa).

Over Met-1–Thr-15 the chain is Cytoplasmic. A helical transmembrane segment spans residues Thr-16 to Ala-36. Residues Asn-37–Tyr-364 are Vacuolar-facing. Residue Asn-117 is glycosylated (N-linked (GlcNAc...) asparagine). Zn(2+)-binding residues include His-152 and Asp-164. Catalysis depends on Glu-196, which acts as the Proton acceptor. 3 residues coordinate Zn(2+): Glu-197, Glu-222, and His-296. The chain crosses the membrane as a helical span at residues Val-365 to Cys-385. The Cytoplasmic segment spans residues Asn-386–Pro-394. A helical membrane pass occupies residues Thr-395 to Phe-415. Topologically, residues Thr-416 to Asn-431 are vacuolar. A helical membrane pass occupies residues Phe-432 to Ala-452. Residues Leu-453 to Thr-465 are Cytoplasmic-facing. Residues Leu-466–Leu-486 traverse the membrane as a helical segment. The Vacuolar segment spans residues Ser-487–Thr-494. The chain crosses the membrane as a helical span at residues Gly-495–Cys-515. Residues Ser-516–Tyr-600 are Cytoplasmic-facing. Residues Asn-540–Glu-552 show a composition bias toward basic and acidic residues. The tract at residues Asn-540–Ser-578 is disordered. Over residues Thr-557–Pro-566 the composition is skewed to polar residues. The segment covering Ser-567–Ser-578 has biased composition (low complexity). The chain crosses the membrane as a helical span at residues Leu-601–Ala-621. The Vacuolar portion of the chain corresponds to Leu-622–Glu-634. A helical transmembrane segment spans residues Ala-635–Thr-655. At Thr-656–Arg-660 the chain is on the cytoplasmic side. The helical transmembrane segment at Phe-661–Ala-681 threads the bilayer. The Vacuolar segment spans residues Pro-682–Leu-913. Residues Asn-729, Asn-794, and Asn-810 are each glycosylated (N-linked (GlcNAc...) asparagine).

This sequence belongs to the peptidase M28 family. It depends on Zn(2+) as a cofactor.

It localises to the vacuole membrane. In terms of biological role, may be involved in vacuolar sorting and osmoregulation. This Kluyveromyces lactis (strain ATCC 8585 / CBS 2359 / DSM 70799 / NBRC 1267 / NRRL Y-1140 / WM37) (Yeast) protein is Vacuolar membrane protease.